A 1281-amino-acid polypeptide reads, in one-letter code: Tubulin polyglutamylase TTLL5 (1281 aa).

The TTL domain occupies 62–407 (RYHLSYKIVR…VCQDPAQRAS (346 aa)). ATP-binding positions include Lys-180, 186–187 (RG), 208–211 (SRYI), and 221–223 (KFD). Arg-186 contributes to the a protein binding site. Residue Arg-247 participates in L-glutamate binding. Residue 268–269 (TN) participates in ATP binding. L-glutamate contacts are provided by Tyr-270, Ser-271, and Lys-293. Residues Asp-353, Glu-366, and Asn-368 each coordinate Mg(2+). The interval 378-488 (PLDLKIKASM…RGGFIRIFPT (111 aa)) is c-MTBD region. Residue Lys-384 coordinates L-glutamate. Disordered regions lie at residues 577–614 (MNVKTETESEEEEEVALDNEDEEQEASQEESAGFLREN), 1072–1114 (SASA…LQTG), and 1199–1281 (SSAT…HTKI). Positions 584–604 (ESEEEEEVALDNEDEEQEASQ) are enriched in acidic residues. Polar residues-rich tracts occupy residues 1086-1113 (SGPTWSTQSDPQAPENHSSSPGSRSLQT), 1199-1212 (SSATASGQKPTTLP), 1240-1263 (ATSQKASKGSSAEGQLNGLQSSLN), and 1270-1281 (ITSSTDPAHTKI).

This sequence belongs to the tubulin--tyrosine ligase family. As to quaternary structure, interacts with the transcriptional coactivators NCOA1/SRC-1 and NCOA2/TIF2. The cofactor is Mg(2+). In terms of tissue distribution, expressed in the retina, found in the rod and cone photoreceptors (at protein level). Widely expressed with highest levels in heart and skeletal muscle and low levels in other tissues.

The protein localises to the cell projection. It localises to the cilium. The protein resides in the cytoplasm. It is found in the cytoskeleton. Its subcellular location is the cilium basal body. The protein localises to the nucleus. The enzyme catalyses L-glutamyl-[protein] + L-glutamate + ATP = gamma-L-glutamyl-L-glutamyl-[protein] + ADP + phosphate + H(+). It catalyses the reaction (L-glutamyl)(n)-gamma-L-glutamyl-L-glutamyl-[protein] + L-glutamate + ATP = (L-glutamyl)(n+1)-gamma-L-glutamyl-L-glutamyl-[protein] + ADP + phosphate + H(+). Its function is as follows. Polyglutamylase which modifies tubulin, generating polyglutamate side chains on the gamma-carboxyl group of specific glutamate residues within the C-terminal tail of tubulin. Preferentially mediates ATP-dependent initiation step of the polyglutamylation reaction over the elongation step. Preferentially modifies the alpha-tubulin tail over a beta-tail. Required for CCSAP localization to both polyglutamylated spindle and cilia microtubules. Increases the effects of transcriptional coactivator NCOA2/TIF2 in glucocorticoid receptor-mediated repression and induction and in androgen receptor-mediated induction. The sequence is that of Tubulin polyglutamylase TTLL5 from Homo sapiens (Human).